Consider the following 370-residue polypeptide: Glutamate 5-kinase (370 aa).

An ATP-binding site is contributed by Lys17. Substrate contacts are provided by Ser56, Asp143, and Asn155. An ATP-binding site is contributed by 175 to 176 (SD). The 78-residue stretch at 280-357 (RGTIRVDAGA…AEIVAILGYS (78 aa)) folds into the PUA domain.

This sequence belongs to the glutamate 5-kinase family.

It localises to the cytoplasm. It carries out the reaction L-glutamate + ATP = L-glutamyl 5-phosphate + ADP. It functions in the pathway amino-acid biosynthesis; L-proline biosynthesis; L-glutamate 5-semialdehyde from L-glutamate: step 1/2. Functionally, catalyzes the transfer of a phosphate group to glutamate to form L-glutamate 5-phosphate. The polypeptide is Glutamate 5-kinase (Cereibacter sphaeroides (strain ATCC 17023 / DSM 158 / JCM 6121 / CCUG 31486 / LMG 2827 / NBRC 12203 / NCIMB 8253 / ATH 2.4.1.) (Rhodobacter sphaeroides)).